The primary structure comprises 236 residues: Cysteine-rich venom protein TRI1 (236 aa).

The signal sequence occupies residues 1–18; it reads MIVFILLSLAAVLEQSFG. An SCP domain is found at 37-165; the sequence is VDRHNSFRRS…GYSYFYVCQY (129 aa). 8 cysteine pairs are disulfide-bonded: C74–C152, C91–C166, C147–C163, C185–C192, C188–C197, C201–C234, C210–C228, and C219–C232. Residues 201-234 form the ShKT domain; it reads CLREDKFTNCKSLVQQNSCQHDWTRKNCPATCFC.

The protein belongs to the CRISP family. Expressed by the venom gland.

The protein resides in the secreted. Blocks contraction of smooth muscle elicited by high potassium-induced depolarization, but does not block caffeine-stimulated contraction. May target voltage-gated calcium channels on smooth muscle. This is Cysteine-rich venom protein TRI1 from Trimorphodon biscutatus (Western lyre snake).